The sequence spans 553 residues: CDP-diacylglycerol--glycerol-3-phosphate 3-phosphatidyltransferase, mitochondrial (553 aa).

The transit peptide at 1-25 (MAAPAAGPVFWRRLLGLLPGRPGLA) directs the protein to the mitochondrion. Ser-46 is modified (phosphoserine). Position 121-128 (121-128 (ASLYLGTG)) interacts with ATP. PLD phosphodiesterase domains are found at residues 212-238 (TIGL…SDSY) and 457-490 (TGWT…GYRS). Active-site residues include His-217, Lys-219, and Asp-224.

It belongs to the CDP-alcohol phosphatidyltransferase class-II family.

The protein resides in the mitochondrion. The enzyme catalyses a CDP-1,2-diacyl-sn-glycerol + sn-glycerol 3-phosphate = a 1,2-diacyl-sn-glycero-3-phospho-(1'-sn-glycero-3'-phosphate) + CMP + H(+). Its pathway is phospholipid metabolism; phosphatidylglycerol biosynthesis; phosphatidylglycerol from CDP-diacylglycerol: step 1/2. Its activity is regulated as follows. Activated by calcium and magnesium and inhibited by other bivalent cations. Functions in the biosynthesis of the anionic phospholipids phosphatidylglycerol and cardiolipin. In Cricetulus griseus (Chinese hamster), this protein is CDP-diacylglycerol--glycerol-3-phosphate 3-phosphatidyltransferase, mitochondrial (PGS1).